The sequence spans 446 residues: WD repeat domain phosphoinositide-interacting protein 1 (446 aa).

WD repeat units follow at residues 3-42, 47-88, 92-126, 131-173, 177-216, 222-261, and 304-343; these read AEAA…LFSL, QLDQ…VYHF, TEIC…IHNI, LLKT…LYDG, KTVC…VFSV, LYEF…IFKL, and FATA…MYNL. A Nuclear receptor interaction motif is present at residues 131–136; it reads LLKTLL. The L/FRRG motif motif lies at 225–228; sequence FRRG. Positions 386–406 are disordered; the sequence is ARPSASSASTVPGYSEDGGAL.

Belongs to the WD repeat PROPPIN family. As to quaternary structure, interacts with androgen receptor (AR) and the estrogen receptors ESR1 and ESR2. Interacts with WIPI2. Interacts with WDR45. Interacts with ATG16L1. May interact with NUDC. In terms of tissue distribution, ubiquitously expressed. Highly expressed in skeletal muscle, heart, testis, pancreas and placenta. Highly expressed in G361, Sk-mel-28, Sk-mel-13, WM852 and WM451 cells. Up-regulated in a variety of tumor tissues.

It localises to the golgi apparatus. The protein localises to the trans-Golgi network. Its subcellular location is the endosome. It is found in the cytoplasmic vesicle. The protein resides in the clathrin-coated vesicle. It localises to the preautophagosomal structure membrane. The protein localises to the cytoplasm. Its subcellular location is the cytoskeleton. In terms of biological role, component of the autophagy machinery that controls the major intracellular degradation process by which cytoplasmic materials are packaged into autophagosomes and delivered to lysosomes for degradation. Plays an important role in starvation- and calcium-mediated autophagy, as well as in mitophagy. Functions downstream of the ULK1 and PI3-kinases that produce phosphatidylinositol 3-phosphate (PtdIns3P) on membranes of the endoplasmic reticulum once activated. Binds phosphatidylinositol 3-phosphate (PtdIns3P), and maybe other phosphoinositides including PtdIns3,5P2 and PtdIns5P, and is recruited to phagophore assembly sites at the endoplasmic reticulum membranes. There, it assists WIPI2 in the recruitment of ATG12-ATG5-ATG16L1, a complex that directly controls the elongation of the nascent autophagosomal membrane. Together with WDR45/WIPI4, promotes ATG2 (ATG2A or ATG2B)-mediated lipid transfer by enhancing ATG2-association with phosphatidylinositol 3-monophosphate (PI3P)-containing membranes. Involved in xenophagy of Staphylococcus aureus. Invading S.aureus cells become entrapped in autophagosome-like WIPI1 positive vesicles targeted for lysosomal degradation. Also plays a distinct role in controlling the transcription of melanogenic enzymes and melanosome maturation, a process that is distinct from starvation-induced autophagy. May also regulate the trafficking of proteins involved in the mannose-6-phosphate receptor (MPR) recycling pathway. This chain is WD repeat domain phosphoinositide-interacting protein 1 (WIPI1), found in Homo sapiens (Human).